The following is a 587-amino-acid chain: Glutathione hydrolase proenzyme (587 aa).

A signal peptide spans 1–28 (MKRTWNVCLTALLSVLLVAGSVPFHAEA). The propeptide occupies 29-35 (KKPPKSY). L-glutamate is bound at residue Arg-113. Thr-403 acts as the Nucleophile in catalysis. Residues Thr-421, Glu-423, Glu-442, Asp-445, 464–465 (SS), and 485–486 (GG) each bind L-glutamate.

Belongs to the gamma-glutamyltransferase family. As to quaternary structure, this enzyme consists of two polypeptide chains, which are synthesized in precursor form from a single polypeptide. In terms of processing, cleaved by autocatalysis into a large and a small subunit.

It localises to the secreted. It catalyses the reaction an N-terminal (5-L-glutamyl)-[peptide] + an alpha-amino acid = 5-L-glutamyl amino acid + an N-terminal L-alpha-aminoacyl-[peptide]. The catalysed reaction is glutathione + H2O = L-cysteinylglycine + L-glutamate. The enzyme catalyses an S-substituted glutathione + H2O = an S-substituted L-cysteinylglycine + L-glutamate. It functions in the pathway sulfur metabolism; glutathione metabolism. Functionally, cleaves the gamma-glutamyl bond of extracellular glutathione (gamma-Glu-Cys-Gly), glutathione conjugates, and other gamma-glutamyl compounds. The metabolism of glutathione releases free glutamate and the dipeptide cysteinyl-glycine, which is hydrolyzed to cysteine and glycine by dipeptidases. The protein is Glutathione hydrolase proenzyme (ggt) of Bacillus subtilis (strain 168).